The sequence spans 117 residues: UPF0145 protein PH1682 (117 aa).

Belongs to the UPF0145 family.

This chain is UPF0145 protein PH1682, found in Pyrococcus horikoshii (strain ATCC 700860 / DSM 12428 / JCM 9974 / NBRC 100139 / OT-3).